The chain runs to 793 residues: Transcription factor castor (793 aa).

A compositionally biased stretch (polar residues) spans 44–53 (NEDISSSTSV). 3 disordered regions span residues 44–101 (NEDI…NLIA), 199–259 (VTST…HTNA), and 272–296 (LEST…DSSY). 3 stretches are compositionally biased toward low complexity: residues 54-68 (QQQQ…QQPQ), 81-98 (SSQN…PNSN), and 210-221 (ATPAPSAGATAG). Threonine 211 is modified (phosphothreonine). At serine 215 the chain carries Phosphoserine. Over residues 233–242 (ESADDDEDDD) the composition is skewed to acidic residues. The span at 245 to 254 (LSSLTSCSSS) shows a compositional bias: low complexity. The span at 273-284 (ESTTDSLDSPSM) shows a compositional bias: polar residues. The segment at 377-402 (FHCHEEPCQGKILSKKDDIIRHLKWH) adopts a C2H2-type 1; atypical zinc-finger fold. C2H2-type zinc fingers lie at residues 439 to 463 (YHCV…ANFH), 498 to 522 (YHCC…KTYH), and 556 to 580 (IHCV…KRKH). A disordered region spans residues 599–682 (EESSLDAMPQ…RLKVEDESSN (84 aa)). Residues 608–629 (QQQQQQQQQQPTSLSQSQSSSS) show a composition bias toward low complexity. Residues 630 to 644 (VCGGSNTSTPLSSLS) are compositionally biased toward polar residues. A DNA-binding region (a.T hook) is located at residues 650–662 (ARKRGRPPKKIQL).

Expressed in a specific subset of neuroblasts in the ventral nerve cord and the procephalic region in the embryo. Expressed in many, if not all, late delaminating NBs, and in early NBs, but only after they have undergone several rounds of ganglion mother cell-producing divisions.

Its subcellular location is the nucleus. In terms of biological role, transcription factor that specifies expression of key genes in developing central nervous system (CNS). Essential for many, if not all, late developing neuroblastoma (NB) sublineages. Binds to the 5'-[CG]C[CT][CT]AAAAA[AT]-3' DNA sequence, like hb, suggesting that cas and hb act as a late regulators in early and late CNS NB sublineage, respectively. Acts by repressing expression of nub/pdm-1 and pdm2/pdm-2 POU genes, and restrict their pattern of expression in appropriate cells. Required for a full expression of vvl/drifter and acj6/I-POU; it is however unknown whether it directly activates these genes. Controls engrailed (en) expression in the ventral nerve cord. This chain is Transcription factor castor (cas), found in Drosophila melanogaster (Fruit fly).